Reading from the N-terminus, the 556-residue chain is Small ribosomal subunit protein bS1 (556 aa).

S1 motif domains are found at residues 35–105 (TIKE…ISQQ), 120–183 (NAII…ISRK), 204–272 (TEPV…LSIK), 289–359 (GYAI…VSLK), 377–444 (DVLE…LSAK), and 461–525 (DSVI…ASVH).

The protein belongs to the bacterial ribosomal protein bS1 family.

Its function is as follows. Binds mRNA; thus facilitating recognition of the initiation point. It is needed to translate mRNA with a short Shine-Dalgarno (SD) purine-rich sequence. The chain is Small ribosomal subunit protein bS1 (rpsA) from Helicobacter pylori (strain ATCC 700392 / 26695) (Campylobacter pylori).